The primary structure comprises 101 residues: Small ribosomal subunit protein uS14 (101 aa).

This sequence belongs to the universal ribosomal protein uS14 family. Part of the 30S ribosomal subunit. Contacts proteins S3 and S10.

Binds 16S rRNA, required for the assembly of 30S particles and may also be responsible for determining the conformation of the 16S rRNA at the A site. This is Small ribosomal subunit protein uS14 from Methylococcus capsulatus (strain ATCC 33009 / NCIMB 11132 / Bath).